Consider the following 101-residue polypeptide: MNLERIPNEEKLSLCRRYYLGGFAFLPFLWLVNILWFFKEAFLKPAYTEQPQIKSYVKKSALGLLLWVAVLTTWITVFQHFRAQWGEVGDYLSFTIPLGTA.

Over Met-1–Arg-17 the chain is Cytoplasmic. Residues Tyr-18 to Trp-36 constitute an intramembrane region (helical). Residues Phe-37–Val-57 are Cytoplasmic-facing. The helical transmembrane segment at Lys-58 to Phe-78 threads the bilayer. Residues Gln-79 to Ala-101 lie on the Lumenal side of the membrane.

Belongs to the PEN-2 family. In terms of assembly, the functional gamma-secretase complex is composed of at least four polypeptides: a presenilin homodimer (psen1 or psen2), nicastrin (ncstn), aph1 (aph1a or aph1b) and psenen.

The protein localises to the endoplasmic reticulum membrane. Its subcellular location is the golgi apparatus. The protein resides in the golgi stack membrane. It is found in the cell membrane. It localises to the membrane. In terms of biological role, essential subunit of the gamma-secretase complex, an endoprotease complex that catalyzes the intramembrane cleavage of integral membrane proteins such as Notch receptors and APP (amyloid-beta precursor protein). The gamma-secretase complex plays a role in Notch and Wnt signaling cascades and regulation of downstream processes via its role in processing key regulatory proteins. This Danio rerio (Zebrafish) protein is Gamma-secretase subunit PEN-2 (psenen).